The sequence spans 133 residues: Large ribosomal subunit protein uL14 (133 aa).

This sequence belongs to the universal ribosomal protein uL14 family. Part of the 50S ribosomal subunit. Forms a cluster with proteins L3 and L24e, part of which may contact the 16S rRNA in 2 intersubunit bridges.

Binds to 23S rRNA. Forms part of two intersubunit bridges in the 70S ribosome. The sequence is that of Large ribosomal subunit protein uL14 from Methanopyrus kandleri (strain AV19 / DSM 6324 / JCM 9639 / NBRC 100938).